We begin with the raw amino-acid sequence, 533 residues long: Apolipoprotein N-acyltransferase (533 aa).

5 helical membrane-spanning segments follow: residues 17 to 37 (FFLP…WPAV), 72 to 92 (LLFC…GGIL), 116 to 136 (GFRS…WAYM), 165 to 185 (GVWG…LLFM), and 190 to 210 (FQVK…PLLY). Positions 232 to 499 (VQPDIDPHEK…QSVLTADVPL (268 aa)) constitute a CN hydrolase domain. E274 acts as the Proton acceptor in catalysis. K352 is an active-site residue. C410 (nucleophile) is an active-site residue. Residues 510-530 (PDLVPHVCLGIAGVLALVAAV) traverse the membrane as a helical segment.

The protein belongs to the CN hydrolase family. Apolipoprotein N-acyltransferase subfamily.

The protein resides in the cell inner membrane. It catalyses the reaction N-terminal S-1,2-diacyl-sn-glyceryl-L-cysteinyl-[lipoprotein] + a glycerophospholipid = N-acyl-S-1,2-diacyl-sn-glyceryl-L-cysteinyl-[lipoprotein] + a 2-acyl-sn-glycero-3-phospholipid + H(+). The protein operates within protein modification; lipoprotein biosynthesis (N-acyl transfer). Its function is as follows. Catalyzes the phospholipid dependent N-acylation of the N-terminal cysteine of apolipoprotein, the last step in lipoprotein maturation. The protein is Apolipoprotein N-acyltransferase of Chlorobaculum tepidum (strain ATCC 49652 / DSM 12025 / NBRC 103806 / TLS) (Chlorobium tepidum).